The sequence spans 598 residues: Aspartate--tRNA(Asp/Asn) ligase (598 aa).

Position 177 (glutamate 177) interacts with L-aspartate. An aspartate region spans residues 201 to 204 (QLFK). Position 223 (arginine 223) interacts with L-aspartate. ATP is bound by residues 223–225 (RDE) and glutamine 232. Histidine 456 provides a ligand contact to L-aspartate. Residue glutamate 493 participates in ATP binding. Arginine 500 provides a ligand contact to L-aspartate. 545–548 (GVDR) is an ATP binding site.

Belongs to the class-II aminoacyl-tRNA synthetase family. Type 1 subfamily. As to quaternary structure, homodimer.

It localises to the cytoplasm. The enzyme catalyses tRNA(Asx) + L-aspartate + ATP = L-aspartyl-tRNA(Asx) + AMP + diphosphate. Aspartyl-tRNA synthetase with relaxed tRNA specificity since it is able to aspartylate not only its cognate tRNA(Asp) but also tRNA(Asn). Reaction proceeds in two steps: L-aspartate is first activated by ATP to form Asp-AMP and then transferred to the acceptor end of tRNA(Asp/Asn). This chain is Aspartate--tRNA(Asp/Asn) ligase, found in Prochlorococcus marinus subsp. pastoris (strain CCMP1986 / NIES-2087 / MED4).